We begin with the raw amino-acid sequence, 154 residues long: Lipoprotein signal peptidase (154 aa).

2 helical membrane-spanning segments follow: residues 57-77 and 86-103; these read LVLS…MIKY and ISLS…YDRV. Catalysis depends on residues Asp-110 and Asp-129. The chain crosses the membrane as a helical span at residues 124-144; sequence VFNVADICVVVGTIMIAIFIV.

The protein belongs to the peptidase A8 family.

It localises to the cell membrane. It carries out the reaction Release of signal peptides from bacterial membrane prolipoproteins. Hydrolyzes -Xaa-Yaa-Zaa-|-(S,diacylglyceryl)Cys-, in which Xaa is hydrophobic (preferably Leu), and Yaa (Ala or Ser) and Zaa (Gly or Ala) have small, neutral side chains.. Its pathway is protein modification; lipoprotein biosynthesis (signal peptide cleavage). Its function is as follows. This protein specifically catalyzes the removal of signal peptides from prolipoproteins. This is Lipoprotein signal peptidase from Clostridium acetobutylicum (strain ATCC 824 / DSM 792 / JCM 1419 / IAM 19013 / LMG 5710 / NBRC 13948 / NRRL B-527 / VKM B-1787 / 2291 / W).